Reading from the N-terminus, the 222-residue chain is 26S proteasome non-ATPase regulatory subunit 9 (222 aa).

Residues 108-194 (QARDMAEARE…KPLNVTVIRR (87 aa)) enclose the PDZ domain. Position 128 is a phosphoserine (Ser128).

The protein belongs to the proteasome subunit p27 family. In terms of assembly, interacts with PSMC3. Part of a transient complex (modulator) containing PSMD9, PSMC6 and PSMC3 formed during the assembly of the 26S proteasome.

Acts as a chaperone during the assembly of the 26S proteasome, specifically of the base subcomplex of the PA700/19S regulatory complex (RC). During the base subcomplex assembly is part of an intermediate PSMD9:PSMC6:PSMC3 module, also known as modulator trimer complex; PSMD9 is released during the further base assembly process. The chain is 26S proteasome non-ATPase regulatory subunit 9 (Psmd9) from Mus musculus (Mouse).